Consider the following 80-residue polypeptide: Metallothionein-like protein type 2, MT2-28 (80 aa).

This sequence belongs to the metallothionein superfamily. Type 15 family.

Its function is as follows. Metallothioneins have a high content of cysteine residues that bind various heavy metals. This chain is Metallothionein-like protein type 2, MT2-28, found in Brassica juncea (Indian mustard).